A 267-amino-acid polypeptide reads, in one-letter code: Hydroxyethylthiazole kinase (267 aa).

M42 lines the substrate pocket. Positions 118 and 164 each coordinate ATP. Residue A191 participates in substrate binding.

This sequence belongs to the Thz kinase family. Requires Mg(2+) as cofactor.

It carries out the reaction 5-(2-hydroxyethyl)-4-methylthiazole + ATP = 4-methyl-5-(2-phosphooxyethyl)-thiazole + ADP + H(+). It participates in cofactor biosynthesis; thiamine diphosphate biosynthesis; 4-methyl-5-(2-phosphoethyl)-thiazole from 5-(2-hydroxyethyl)-4-methylthiazole: step 1/1. Its function is as follows. Catalyzes the phosphorylation of the hydroxyl group of 4-methyl-5-beta-hydroxyethylthiazole (THZ). This chain is Hydroxyethylthiazole kinase, found in Pasteurella multocida (strain Pm70).